Reading from the N-terminus, the 228-residue chain is Ribosomal RNA small subunit methyltransferase G (228 aa).

Residues G89, L94, 140–141 (VE), and R159 each bind S-adenosyl-L-methionine.

Belongs to the methyltransferase superfamily. RNA methyltransferase RsmG family.

The protein localises to the cytoplasm. The enzyme catalyses guanosine(527) in 16S rRNA + S-adenosyl-L-methionine = N(7)-methylguanosine(527) in 16S rRNA + S-adenosyl-L-homocysteine. Its function is as follows. Specifically methylates the N7 position of guanine in position 527 of 16S rRNA. The protein is Ribosomal RNA small subunit methyltransferase G of Burkholderia vietnamiensis (strain G4 / LMG 22486) (Burkholderia cepacia (strain R1808)).